A 1304-amino-acid polypeptide reads, in one-letter code: NAD-dependent protein deacetylase Sir2B (1304 aa).

The 439-residue stretch at 28–466 (TEEEKKKVKE…LISIHNIKMK (439 aa)) folds into the Deacetylase sirtuin-type domain. NAD(+)-binding positions include 53-72 (GAGISTSSGLQDFRGPTGIW) and 274-277 (QNID). His-294 functions as the Proton acceptor in the catalytic mechanism. Residues Cys-302, Cys-305, Cys-327, and Cys-330 each contribute to the Zn(2+) site. Residues 371 to 373 (GSS), 399 to 401 (NYQ), and Val-417 each bind NAD(+). Disordered stretches follow at residues 545–585 (EHNN…SSSI), 749–827 (KVKS…DKDN), and 1154–1203 (EIKY…DDNN). Composition is skewed to low complexity over residues 548-585 (NNNNNNNNNNNNNNNNNNNNNNNNNNNNNNNNNSSSSI), 756-806 (NNNN…ISDH), and 1182-1203 (DDNNNNDDNNNNDDNNNNDDNN).

The protein belongs to the sirtuin family. Class IV subfamily. The cofactor is Zn(2+).

It carries out the reaction N(6)-acetyl-L-lysyl-[protein] + NAD(+) + H2O = 2''-O-acetyl-ADP-D-ribose + nicotinamide + L-lysyl-[protein]. Its function is as follows. Regulates the expression of the surface antigen-coding var genes central to the malaria pathogenesis. Cooperates with Sir2A to mediate silencing and mutual exclusive expression of only 1 of the 60 subtelomeric var genes at a time, coding for functionally different but epitopically variant versions of the erythrocyte membrane protein 1 (PfEMP1) molecule, to evade the detection by host immune surveillance. This chain is NAD-dependent protein deacetylase Sir2B, found in Plasmodium falciparum (isolate 3D7).